Consider the following 473-residue polypeptide: Siroheme synthase 1 (473 aa).

The precorrin-2 dehydrogenase /sirohydrochlorin ferrochelatase stretch occupies residues Met1–Val204. NAD(+) is bound by residues Glu22–Ile23 and Cys43–Glu44. Ser128 carries the phosphoserine modification. A uroporphyrinogen-III C-methyltransferase region spans residues Gly216 to Gly473. Pro225 is an S-adenosyl-L-methionine binding site. Catalysis depends on Asp248, which acts as the Proton acceptor. Lys270 (proton donor) is an active-site residue. S-adenosyl-L-methionine contacts are provided by residues Gly301–Asp303, Ile306, Thr331–Ala332, Met382, and Gly411.

This sequence in the N-terminal section; belongs to the precorrin-2 dehydrogenase / sirohydrochlorin ferrochelatase family. It in the C-terminal section; belongs to the precorrin methyltransferase family.

The catalysed reaction is uroporphyrinogen III + 2 S-adenosyl-L-methionine = precorrin-2 + 2 S-adenosyl-L-homocysteine + H(+). It carries out the reaction precorrin-2 + NAD(+) = sirohydrochlorin + NADH + 2 H(+). It catalyses the reaction siroheme + 2 H(+) = sirohydrochlorin + Fe(2+). The protein operates within cofactor biosynthesis; adenosylcobalamin biosynthesis; precorrin-2 from uroporphyrinogen III: step 1/1. It functions in the pathway cofactor biosynthesis; adenosylcobalamin biosynthesis; sirohydrochlorin from precorrin-2: step 1/1. Its pathway is porphyrin-containing compound metabolism; siroheme biosynthesis; precorrin-2 from uroporphyrinogen III: step 1/1. It participates in porphyrin-containing compound metabolism; siroheme biosynthesis; siroheme from sirohydrochlorin: step 1/1. The protein operates within porphyrin-containing compound metabolism; siroheme biosynthesis; sirohydrochlorin from precorrin-2: step 1/1. Its function is as follows. Multifunctional enzyme that catalyzes the SAM-dependent methylations of uroporphyrinogen III at position C-2 and C-7 to form precorrin-2 via precorrin-1. Then it catalyzes the NAD-dependent ring dehydrogenation of precorrin-2 to yield sirohydrochlorin. Finally, it catalyzes the ferrochelation of sirohydrochlorin to yield siroheme. The chain is Siroheme synthase 1 from Yersinia pestis (strain Pestoides F).